The chain runs to 205 residues: Large ribosomal subunit protein uL3 (205 aa).

The protein belongs to the universal ribosomal protein uL3 family. As to quaternary structure, part of the 50S ribosomal subunit. Forms a cluster with proteins L14 and L19.

Its function is as follows. One of the primary rRNA binding proteins, it binds directly near the 3'-end of the 23S rRNA, where it nucleates assembly of the 50S subunit. The chain is Large ribosomal subunit protein uL3 from Thermosipho africanus (strain TCF52B).